Here is a 268-residue protein sequence, read N- to C-terminus: 14-3-3-like protein GF14 iota (268 aa).

A phosphoserine mark is found at serine 70 and serine 193. The residue at position 214 (threonine 214) is a Phosphothreonine. Residues 240–268 (DLPEDGGEDNIKTEESKQEQAKPADATEN) form a disordered region. Residues 248-261 (DNIKTEESKQEQAK) show a composition bias toward basic and acidic residues.

Belongs to the 14-3-3 family. As to expression, expressed in flowers.

The protein resides in the nucleus. Its subcellular location is the cytoplasm. Functionally, is associated with a DNA binding complex that binds to the G box, a well-characterized cis-acting DNA regulatory element found in plant genes. The chain is 14-3-3-like protein GF14 iota from Arabidopsis thaliana (Mouse-ear cress).